Consider the following 471-residue polypeptide: Ribulose bisphosphate carboxylase large chain (471 aa).

Lysine 5 carries the N6,N6,N6-trimethyllysine modification. Substrate-binding residues include asparagine 114 and threonine 164. Catalysis depends on lysine 166, which acts as the Proton acceptor. Position 168 (lysine 168) interacts with substrate. 3 residues coordinate Mg(2+): lysine 192, aspartate 194, and glutamate 195. Lysine 192 carries the N6-carboxylysine modification. The active-site Proton acceptor is histidine 285. 3 residues coordinate substrate: arginine 286, histidine 318, and serine 370.

It belongs to the RuBisCO large chain family. Type I subfamily. As to quaternary structure, heterohexadecamer of 8 large chains and 8 small chains; disulfide-linked. The disulfide link is formed within the large subunit homodimers. Requires Mg(2+) as cofactor. In terms of processing, the disulfide bond which can form in the large chain dimeric partners within the hexadecamer appears to be associated with oxidative stress and protein turnover.

The protein localises to the plastid. The protein resides in the chloroplast. It carries out the reaction 2 (2R)-3-phosphoglycerate + 2 H(+) = D-ribulose 1,5-bisphosphate + CO2 + H2O. It catalyses the reaction D-ribulose 1,5-bisphosphate + O2 = 2-phosphoglycolate + (2R)-3-phosphoglycerate + 2 H(+). Functionally, ruBisCO catalyzes two reactions: the carboxylation of D-ribulose 1,5-bisphosphate, the primary event in carbon dioxide fixation, as well as the oxidative fragmentation of the pentose substrate in the photorespiration process. Both reactions occur simultaneously and in competition at the same active site. This Chiococca alba (West Indian milkberry) protein is Ribulose bisphosphate carboxylase large chain.